Consider the following 304-residue polypeptide: Ornithine carbamoyltransferase (304 aa).

Carbamoyl phosphate is bound by residues serine 53–threonine 56, glutamine 80, arginine 104, and histidine 131–glutamine 134. Residues asparagine 162, aspartate 219, and serine 223–methionine 224 each bind L-ornithine. Residues cysteine 259 to leucine 260 and arginine 287 each bind carbamoyl phosphate.

It belongs to the aspartate/ornithine carbamoyltransferase superfamily. OTCase family.

It is found in the cytoplasm. The catalysed reaction is carbamoyl phosphate + L-ornithine = L-citrulline + phosphate + H(+). The protein operates within amino-acid biosynthesis; L-arginine biosynthesis; L-arginine from L-ornithine and carbamoyl phosphate: step 1/3. Reversibly catalyzes the transfer of the carbamoyl group from carbamoyl phosphate (CP) to the N(epsilon) atom of ornithine (ORN) to produce L-citrulline. The chain is Ornithine carbamoyltransferase from Nitrosococcus oceani (strain ATCC 19707 / BCRC 17464 / JCM 30415 / NCIMB 11848 / C-107).